Consider the following 557-residue polypeptide: Probable transcription factor sol4 (557 aa).

The segment at 26–186 is fungal transcription factor domain; it reads IQYFFEDINW…EREMRRRMFC (161 aa). A disordered region spans residues 463-490; it reads SGTQTRSMPSTETLTYNSSSSTSYGDGH. Residues 472–485 show a composition bias toward low complexity; the sequence is STETLTYNSSSSTS.

It localises to the nucleus. In terms of biological role, probable transcription factor that regulates the expression of the gene cluster that mediates the biosynthesis of the phytotoxin solanapyrone, a causal agent of early blight disease of potato and tomato. The chain is Probable transcription factor sol4 (sol4) from Alternaria solani.